We begin with the raw amino-acid sequence, 178 residues long: CASP-like protein 5B1 (178 aa).

Over 1–37 the chain is Cytoplasmic; it reads MDASNPIVHPIGDHHAVDLEEGPLIVTMKELPGMPGT. A helical transmembrane segment spans residues 38 to 58; the sequence is IGGLALRVGQFLFAAAAIVIM. At 59 to 69 the chain is on the extracellular side; the sequence is VTGDEFTNYTA. N66 carries an N-linked (GlcNAc...) asparagine glycan. The helical transmembrane segment at 70–90 threads the bilayer; that stretch reads FCYLVAAMSLQFLWSFMLAIL. The Cytoplasmic segment spans residues 91-104; the sequence is DTYALLIKRGLRNS. The chain crosses the membrane as a helical span at residues 105 to 125; the sequence is VLLSLFVVGDWVTATLSLAAA. Over 126–154 the chain is Extracellular; the sequence is CSTAGVTVLFDNDLNYCGQMHCHRYQLSA. The chain crosses the membrane as a helical span at residues 155–175; sequence AMAFLSWLLIGMSSLLTFWLW. The Cytoplasmic segment spans residues 176–178; it reads ASE.

This sequence belongs to the Casparian strip membrane proteins (CASP) family. Homodimer and heterodimers.

The protein localises to the cell membrane. The polypeptide is CASP-like protein 5B1 (Ginkgo biloba (Ginkgo)).